A 598-amino-acid chain; its full sequence is NADH-quinone oxidoreductase subunit C/D (598 aa).

The NADH dehydrogenase I subunit C stretch occupies residues 1 to 190 (MSIFTQEVSA…EAFSLDDERL (190 aa)). The NADH dehydrogenase I subunit D stretch occupies residues 214-598 (DYLFLNLGPN…IDFVMADVDR (385 aa)).

This sequence in the N-terminal section; belongs to the complex I 30 kDa subunit family. It in the C-terminal section; belongs to the complex I 49 kDa subunit family. In terms of assembly, NDH-1 is composed of 13 different subunits. Subunits NuoB, CD, E, F, and G constitute the peripheral sector of the complex.

It is found in the cell inner membrane. The catalysed reaction is a quinone + NADH + 5 H(+)(in) = a quinol + NAD(+) + 4 H(+)(out). NDH-1 shuttles electrons from NADH, via FMN and iron-sulfur (Fe-S) centers, to quinones in the respiratory chain. The immediate electron acceptor for the enzyme in this species is believed to be ubiquinone. Couples the redox reaction to proton translocation (for every two electrons transferred, four hydrogen ions are translocated across the cytoplasmic membrane), and thus conserves the redox energy in a proton gradient. This Shewanella woodyi (strain ATCC 51908 / MS32) protein is NADH-quinone oxidoreductase subunit C/D.